We begin with the raw amino-acid sequence, 359 residues long: Phospho-N-acetylmuramoyl-pentapeptide-transferase (359 aa).

10 helical membrane passes run 3–23, 55–75, 80–100, 117–137, 156–176, 187–207, 231–251, 255–275, 280–300, and 334–354; these read QIMI…PALI, VAIL…GLAF, ITAS…VGFL, TAKT…VLQF, IATV…VVSA, LDGL…LITF, LALI…WNAA, IFMG…LSVT, ILAV…VLQI, and FWLL…GEWL.

It belongs to the glycosyltransferase 4 family. MraY subfamily. Mg(2+) serves as cofactor.

The protein localises to the cell inner membrane. The catalysed reaction is UDP-N-acetyl-alpha-D-muramoyl-L-alanyl-gamma-D-glutamyl-meso-2,6-diaminopimeloyl-D-alanyl-D-alanine + di-trans,octa-cis-undecaprenyl phosphate = di-trans,octa-cis-undecaprenyl diphospho-N-acetyl-alpha-D-muramoyl-L-alanyl-D-glutamyl-meso-2,6-diaminopimeloyl-D-alanyl-D-alanine + UMP. It participates in cell wall biogenesis; peptidoglycan biosynthesis. Functionally, catalyzes the initial step of the lipid cycle reactions in the biosynthesis of the cell wall peptidoglycan: transfers peptidoglycan precursor phospho-MurNAc-pentapeptide from UDP-MurNAc-pentapeptide onto the lipid carrier undecaprenyl phosphate, yielding undecaprenyl-pyrophosphoryl-MurNAc-pentapeptide, known as lipid I. This is Phospho-N-acetylmuramoyl-pentapeptide-transferase from Mycobacterium marinum (strain ATCC BAA-535 / M).